We begin with the raw amino-acid sequence, 248 residues long: Ubiquinone/menaquinone biosynthesis C-methyltransferase UbiE (248 aa).

S-adenosyl-L-methionine is bound by residues T71, D92, and 120-121; that span reads DA.

Belongs to the class I-like SAM-binding methyltransferase superfamily. MenG/UbiE family.

The enzyme catalyses a 2-demethylmenaquinol + S-adenosyl-L-methionine = a menaquinol + S-adenosyl-L-homocysteine + H(+). It carries out the reaction a 2-methoxy-6-(all-trans-polyprenyl)benzene-1,4-diol + S-adenosyl-L-methionine = a 5-methoxy-2-methyl-3-(all-trans-polyprenyl)benzene-1,4-diol + S-adenosyl-L-homocysteine + H(+). It participates in quinol/quinone metabolism; menaquinone biosynthesis; menaquinol from 1,4-dihydroxy-2-naphthoate: step 2/2. Its pathway is cofactor biosynthesis; ubiquinone biosynthesis. Methyltransferase required for the conversion of demethylmenaquinol (DMKH2) to menaquinol (MKH2) and the conversion of 2-polyprenyl-6-methoxy-1,4-benzoquinol (DDMQH2) to 2-polyprenyl-3-methyl-6-methoxy-1,4-benzoquinol (DMQH2). This Methylococcus capsulatus (strain ATCC 33009 / NCIMB 11132 / Bath) protein is Ubiquinone/menaquinone biosynthesis C-methyltransferase UbiE.